The primary structure comprises 246 residues: Probable transcriptional regulatory protein WRi_002620 (246 aa).

The segment at 1–22 (MAGHSQFSNIKHRKGAQDAKRS) is disordered.

It belongs to the TACO1 family.

The protein localises to the cytoplasm. The polypeptide is Probable transcriptional regulatory protein WRi_002620 (Wolbachia sp. subsp. Drosophila simulans (strain wRi)).